Here is a 567-residue protein sequence, read N- to C-terminus: Protein ESMERALDA 1 (567 aa).

Residues 1–41 are disordered; that stretch reads MLAKNRLPGSGHTTPSPPASPRRSPRYRHGRSKAAAGSRFP. Over 1–65 the chain is Cytoplasmic; the sequence is MLAKNRLPGS…ILLSVLLRRQ (65 aa). The segment covering 23–32 has biased composition (basic residues); that stretch reads RSPRYRHGRS. The chain crosses the membrane as a helical; Signal-anchor for type II membrane protein span at residues 66–86; sequence GIFLFAPLIYISCMLLYMGTV. The Lumenal segment spans residues 87–567; it reads SFDVVPIIQR…TPESRPPPAT (481 aa). Asn121, Asn145, Asn184, and Asn238 each carry an N-linked (GlcNAc...) asparagine glycan. 331-333 contributes to the substrate binding site; the sequence is HLR. Residues Asn403, Asn419, Asn449, Asn538, and Asn554 are each glycosylated (N-linked (GlcNAc...) asparagine).

It belongs to the glycosyltransferase GT106 family. Ubiquitous.

It is found in the golgi apparatus membrane. It participates in protein modification; protein glycosylation. Functionally, glycosyltransferase that plays a role in cell adhesion. This chain is Protein ESMERALDA 1, found in Arabidopsis thaliana (Mouse-ear cress).